Reading from the N-terminus, the 107-residue chain is Large ribosomal subunit protein eL33A (107 aa).

A2 carries the post-translational modification N-acetylalanine; partial. A Glycyl lysine isopeptide (Lys-Gly) (interchain with G-Cter in ubiquitin) cross-link involves residue K47.

Belongs to the eukaryotic ribosomal protein eL33 family. As to quaternary structure, component of the large ribosomal subunit (LSU). Mature yeast ribosomes consist of a small (40S) and a large (60S) subunit. The 40S small subunit contains 1 molecule of ribosomal RNA (18S rRNA) and 33 different proteins (encoded by 57 genes). The large 60S subunit contains 3 rRNA molecules (25S, 5.8S and 5S rRNA) and 46 different proteins (encoded by 81 genes). In terms of processing, N-terminally acetylated by acetyltransferase NatA.

It localises to the cytoplasm. In terms of biological role, component of the ribosome, a large ribonucleoprotein complex responsible for the synthesis of proteins in the cell. The small ribosomal subunit (SSU) binds messenger RNAs (mRNAs) and translates the encoded message by selecting cognate aminoacyl-transfer RNA (tRNA) molecules. The large subunit (LSU) contains the ribosomal catalytic site termed the peptidyl transferase center (PTC), which catalyzes the formation of peptide bonds, thereby polymerizing the amino acids delivered by tRNAs into a polypeptide chain. The nascent polypeptides leave the ribosome through a tunnel in the LSU and interact with protein factors that function in enzymatic processing, targeting, and the membrane insertion of nascent chains at the exit of the ribosomal tunnel. The polypeptide is Large ribosomal subunit protein eL33A (Saccharomyces cerevisiae (strain ATCC 204508 / S288c) (Baker's yeast)).